Consider the following 420-residue polypeptide: O-methyltransferase opaF (420 aa).

S-adenosyl-L-methionine contacts are provided by residues 262–263 (GG), Asp287, and 308–309 (DL). His328 (proton acceptor) is an active-site residue.

Belongs to the class I-like SAM-binding methyltransferase superfamily. Cation-independent O-methyltransferase family.

The protein operates within secondary metabolite biosynthesis. Functionally, O-methyltransferase; part of the gene cluster that mediates the biosynthesis of oxepinamides, derivatives of anthranilyl-containing tripeptides that share an oxepin ring and a fused pyrimidinone moiety. The nonribosomal peptide synthetase (NRPS) opaA assembles the quinazolinone core with D-Phe incorporation. The first adenylation domain (A1) of opaA loads and activates anthranilic acid whereas the second A domain (A2) is for activating of L-Phe, which is then converted to D-form by the E domain. The third A domain (A3) is responsible for L-Ile activation and the terminal condensation domain C3 for cyclization and releasing the NRPS product protuboxepin K. The cytochrome P450 monooxygenase opaB then catalyzes alone the oxepin ring formation to convert protuboxepin K into protuboxepin A. The flavoenzyme opaC installs subsequently one hydroxyl group at the oxepin ring, accompanied by double bond migration, to form 15-epi-oxepinamide E. The epimerase opaE changes the D-Phe residue back to L-form, leading to oxepinamide E, which is further methylated at the hydroxyl group at C-12 by the O-methyltransferase OpaF to yield oxepinamide F. In Aspergillus ustus, this protein is O-methyltransferase opaF.